A 629-amino-acid polypeptide reads, in one-letter code: Phosphomethylpyrimidine synthase (629 aa).

The disordered stretch occupies residues 1–21 (MSIKAKNAAHLRESAQVDSGS). Substrate contacts are provided by residues Asn233, Met262, Tyr291, His327, 347 to 349 (SRG), 388 to 391 (DGLR), and Glu427. His431 is a Zn(2+) binding site. Tyr454 is a binding site for substrate. His495 contacts Zn(2+). 3 residues coordinate [4Fe-4S] cluster: Cys575, Cys578, and Cys583.

This sequence belongs to the ThiC family. In terms of assembly, homodimer. [4Fe-4S] cluster is required as a cofactor.

It catalyses the reaction 5-amino-1-(5-phospho-beta-D-ribosyl)imidazole + S-adenosyl-L-methionine = 4-amino-2-methyl-5-(phosphooxymethyl)pyrimidine + CO + 5'-deoxyadenosine + formate + L-methionine + 3 H(+). It participates in cofactor biosynthesis; thiamine diphosphate biosynthesis. Functionally, catalyzes the synthesis of the hydroxymethylpyrimidine phosphate (HMP-P) moiety of thiamine from aminoimidazole ribotide (AIR) in a radical S-adenosyl-L-methionine (SAM)-dependent reaction. The chain is Phosphomethylpyrimidine synthase from Pseudomonas syringae pv. syringae (strain B728a).